The primary structure comprises 488 residues: Glutamyl-tRNA(Gln) amidotransferase subunit A (488 aa).

Residues K76 and S151 each act as charge relay system in the active site. S175 (acyl-ester intermediate) is an active-site residue.

This sequence belongs to the amidase family. GatA subfamily. As to quaternary structure, heterotrimer of A, B and C subunits.

It catalyses the reaction L-glutamyl-tRNA(Gln) + L-glutamine + ATP + H2O = L-glutaminyl-tRNA(Gln) + L-glutamate + ADP + phosphate + H(+). Its function is as follows. Allows the formation of correctly charged Gln-tRNA(Gln) through the transamidation of misacylated Glu-tRNA(Gln) in organisms which lack glutaminyl-tRNA synthetase. The reaction takes place in the presence of glutamine and ATP through an activated gamma-phospho-Glu-tRNA(Gln). The sequence is that of Glutamyl-tRNA(Gln) amidotransferase subunit A from Symbiobacterium thermophilum (strain DSM 24528 / JCM 14929 / IAM 14863 / T).